The primary structure comprises 436 residues: N-lysine methyltransferase SMYD2 (436 aa).

Residues 10 to 244 (GGLERFASPG…PGEEVFTSYI (235 aa)) form the SET domain. 20-22 (KGR) contacts S-adenosyl-L-methionine. 8 residues coordinate Zn(2+): Cys55, Cys58, Cys68, Cys71, Cys77, Cys81, His89, and Cys93. The MYND-type zinc-finger motif lies at 55–93 (CDGCFARKEGLSKCGRCKQAFYCNVECQKEDWPMHKLEC). Residues His140, 209–210 (NH), and 261–263 (YFF) each bind S-adenosyl-L-methionine.

It belongs to the class V-like SAM-binding methyltransferase superfamily.

Its subcellular location is the cytoplasm. The protein localises to the cytosol. The protein resides in the nucleus. The catalysed reaction is L-lysyl(4)-[histone H3] + 3 S-adenosyl-L-methionine = N(6),N(6),N(6)-trimethyl-L-lysyl(4)-[histone H3] + 3 S-adenosyl-L-homocysteine + 3 H(+). The enzyme catalyses L-lysyl-[protein] + S-adenosyl-L-methionine = N(6)-methyl-L-lysyl-[protein] + S-adenosyl-L-homocysteine + H(+). Functionally, protein-lysine N-methyltransferase that methylates both histones and non-histone proteins, including p53/TP53 and RB1. Specifically trimethylates histone H3 'Lys-4' (H3K4me3) in vivo. The activity requires interaction with HSP90alpha. Shows even higher methyltransferase activity on p53/TP53. Monomethylates 'Lys-370' of p53/TP53, leading to decreased DNA-binding activity and subsequent transcriptional regulation activity of p53/TP53. Monomethylates RB1 at 'Lys-860'. In Gallus gallus (Chicken), this protein is N-lysine methyltransferase SMYD2 (SMYD2).